The sequence spans 288 residues: MIMFALPNKGRISEPVMKVLEKAGLKITVKGRSLFANTVDDNIKVMFARARDIPEFVADGVADIGVTGYDLVLERNVEDKVDFLLDFGFGFAKLVLAAPESSNINSIDDIKEGMRVATEFPNLTKKYFEKLNKKVEIIELSGATEIAPFIGIADLISDLTSTGTTLRLNRLKVIDEIVSSTTRLIANKNSLKDKEKREKINQIVIAIKSVLFAETKRLIMMNAPKDKVEEIRKLIPGMAGPTVSKVLSDDNMVAIHAVVNEDEIFTLVPKLHALGARDILVVPIERIL.

It belongs to the ATP phosphoribosyltransferase family. Long subfamily. The cofactor is Mg(2+).

It is found in the cytoplasm. The enzyme catalyses 1-(5-phospho-beta-D-ribosyl)-ATP + diphosphate = 5-phospho-alpha-D-ribose 1-diphosphate + ATP. The protein operates within amino-acid biosynthesis; L-histidine biosynthesis; L-histidine from 5-phospho-alpha-D-ribose 1-diphosphate: step 1/9. Its activity is regulated as follows. Feedback inhibited by histidine. In terms of biological role, catalyzes the condensation of ATP and 5-phosphoribose 1-diphosphate to form N'-(5'-phosphoribosyl)-ATP (PR-ATP). Has a crucial role in the pathway because the rate of histidine biosynthesis seems to be controlled primarily by regulation of HisG enzymatic activity. This Methanocaldococcus jannaschii (strain ATCC 43067 / DSM 2661 / JAL-1 / JCM 10045 / NBRC 100440) (Methanococcus jannaschii) protein is ATP phosphoribosyltransferase (hisG).